We begin with the raw amino-acid sequence, 1001 residues long: Protein MEI2-like 4 (1001 aa).

Residues 100-120 form a disordered region; the sequence is HANLPPSPWRPDQETGRQTDS. RRM domains are found at residues 275–348 and 360–433; these read RTLF…YSIP and GTIV…TSRL. Disordered regions lie at residues 767-815 and 941-1001; these read GGPS…KKQY and FHSD…PAKD. Positions 793–803 are enriched in basic and acidic residues; that stretch reads PGERMRSRRND. Positions 978-994 are enriched in polar residues; that stretch reads DISITSVNCDTSTNGVD.

In terms of biological role, probable RNA-binding protein that may play a role in growth regulation. The protein is Protein MEI2-like 4 (ML4) of Oryza sativa subsp. japonica (Rice).